The following is a 474-amino-acid chain: MTDEIPFDKPIRDIASYVHNYTIPSSPTSFKHARGVILDSLGCAIETLHRSSEACTLLGPVIPGTTFPYGFHLPGTSYVLDPVKGTFDLGVLIRYLDHNDAFGGAEWGHPSDTLSAIIAVMDWLCRAEQRSSTTSIRYPPLTIKTLLEAAIKAYEIQGCYQLQNAFNAYGIDHVILVKLAAASVCSWLMGMTETQTISGANTTSRKGWAAADAAMRAVHLCLLTHAGQLGSKQPLNDKRYGFLVHTFGLEAGFALPRAFGDWAIQNIFTKLMPCEGHGISAVEAALVQGRKLKSCGHTVSDIKHIDLRVTAAANLIISKIGRLYNAADRDHCIQYVIALAFLKGRFPDAEDYMDDSPYANSKEMDDLREKIMMKVDQDLTQGYLDPERKSCGTGMTVYLNNGTVLDEVLVEYPAGHLKNPRTKELHQRKFEKNMRLAFTDAEIANIVKCIEDDEMPISSFVDLFTRDSKGMAKL.

It belongs to the PrpD family. As to quaternary structure, monomer.

It carries out the reaction (4E,11E)-2-hydroxytrideca-4,11-dien-1,2,3-tricarboxylate + 2 H(+) = [4-(deca-1,8-diyl)-2,5-dioxo-2,5-dihydro-3-furanyl]acetate + 2 H2O. It functions in the pathway secondary metabolite biosynthesis. Alkylcitrate dehydratasee; part of the gene cluster that mediates the biosynthesis of the antihypercholesterolemic agents phomoidrides which are dimeric anhydrides. Within the pathway, the alkylcitrate synthase (ACS) tstiJ and the alkylcitrate dehydratase (ACDH) tstI produce the decarboxylated monomeric anhydrides by coupling the C12-fatty acyl product from phiA with oxalacetic acid. The pathway begins with the highly reducing polyketide synthase tstA that catalyzes the formation of a C12-fatty acyl-ACP, starting from one acetate and 5 malonate units. The hydrolase tstM is involved in the release of the C12-fatty acyl chain from phiA. The alkylcitrate synthase (ACS) tstJ and the alkylcitrate dehydratase (ACDH) tstI then give rise to decarboxylated monomeric anhydrides by coupling the C12-fatty acyl chain with oxalacetic acid. The cyclase tstC is responsible for the dimerization of the monomeric anhydrides which leads to the production of prephomoidride that contains the characteristic bicyclo[4.3.1]deca-1,6-diene system of phomoidrides. Iterative oxidation catalyzed by the alpha-ketoglutarate-dependent dioxygenase tstK produced then phomoidride A. Finally, the methyltransferase tstE converts phomoidride A to phomoidride B via an acetalization reaction. The phosphatidylethanolamine-binding protein tstB and tstN are not essential for dimerization and their functions have still to be determined. The chain is Alkylcitrate dehydratase phiI from Talaromyces stipitatus (strain ATCC 10500 / CBS 375.48 / QM 6759 / NRRL 1006) (Penicillium stipitatum).